Consider the following 397-residue polypeptide: Acetate kinase (397 aa).

Residue asparagine 7 coordinates Mg(2+). Position 14 (lysine 14) interacts with ATP. A substrate-binding site is contributed by arginine 90. Aspartate 147 (proton donor/acceptor) is an active-site residue. Residues 207–211 (HLGNG), 282–284 (DFR), and 330–334 (GLGEN) contribute to the ATP site. Mg(2+) is bound at residue glutamate 383.

Belongs to the acetokinase family. In terms of assembly, homodimer. Requires Mg(2+) as cofactor. It depends on Mn(2+) as a cofactor.

It is found in the cytoplasm. The enzyme catalyses acetate + ATP = acetyl phosphate + ADP. It participates in metabolic intermediate biosynthesis; acetyl-CoA biosynthesis; acetyl-CoA from acetate: step 1/2. Its function is as follows. Catalyzes the formation of acetyl phosphate from acetate and ATP. Can also catalyze the reverse reaction. The protein is Acetate kinase of Clostridium botulinum (strain Okra / Type B1).